The sequence spans 982 residues: Mitochondrial DNA mismatch repair protein mutS homolog (982 aa).

Position 698 to 705 (698 to 705) interacts with ATP; the sequence is SVNGAGKS. Positions 905–951 constitute an HNH domain; sequence CEICGAPADAVHHIKPKSEHKKLCNRKLNRRSNLVPVCSSCHLDIHR.

This sequence belongs to the DNA mismatch repair MutS family.

It localises to the mitochondrion. Functionally, may be involved in DNA-mismatch repair. The polypeptide is Mitochondrial DNA mismatch repair protein mutS homolog (Sarcophyton glaucum (Toadstool umbrella leather coral)).